Here is a 540-residue protein sequence, read N- to C-terminus: Phosphoenolpyruvate carboxykinase (ATP) (540 aa).

R65 is a binding site for substrate. An N6-acetyllysine modification is found at K87. The substrate site is built by Y207 and K213. ATP contacts are provided by residues K213, H232, and 248–256 (GLSGTGKTT). Residues K213 and H232 each contribute to the Mn(2+) site. D269 is a binding site for Mn(2+). Residues E297, R333, 449–450 (RI), and T455 each bind ATP. Position 333 (R333) interacts with substrate. N6-acetyllysine is present on K523.

Belongs to the phosphoenolpyruvate carboxykinase (ATP) family. In terms of assembly, monomer. The cofactor is Mn(2+).

It is found in the cytoplasm. The enzyme catalyses oxaloacetate + ATP = phosphoenolpyruvate + ADP + CO2. The protein operates within carbohydrate biosynthesis; gluconeogenesis. In terms of biological role, involved in the gluconeogenesis. Catalyzes the conversion of oxaloacetate (OAA) to phosphoenolpyruvate (PEP) through direct phosphoryl transfer between the nucleoside triphosphate and OAA. The polypeptide is Phosphoenolpyruvate carboxykinase (ATP) (Escherichia coli O6:H1 (strain CFT073 / ATCC 700928 / UPEC)).